Consider the following 376-residue polypeptide: Peroxisomal targeting signal 2 receptor (376 aa).

WD repeat units lie at residues 58–98, 102–142, 182–222, 226–267, 279–319, and 339–376; these read DTQD…YPVM, EHQR…NTSL, DNND…PLFM, AHNG…PNVH, GHEF…TSRV, and AHTEFVMGCDWSLWGEPGWVVTTGWDEMVYVWNTQRLQ.

The protein belongs to the WD repeat peroxin-7 family. In terms of assembly, interacts with PEX20. Post-translationally, polyubiquitinated, leading to its degradation by the proteasome. Ubiquitination is dependent of PEX5 and PEX20 and takes place following recycling into the cytosol.

The protein resides in the cytoplasm. Its subcellular location is the cytosol. The protein localises to the peroxisome matrix. Its function is as follows. Receptor required for the peroxisomal import of proteins containing a C-terminal PTS2-type peroxisomal targeting signal, such as 3-oxoacyl-CoA thiolase. Specifically binds to cargo proteins containing a PTS2 peroxisomal targeting signal in the cytosol. Cargo protein-binding triggers interaction with PEX20 and formation of a ternary complex composed of PEX20 and PEX7 along with PTS2-containing cargo proteins, which is tranlocated into peroxisomes by passing through the peroxisomal docking complex. PEX7 receptor is then retrotranslocated into the cytosol, where it is ubiquitinated and degraded. The protein is Peroxisomal targeting signal 2 receptor of Komagataella phaffii (strain GS115 / ATCC 20864) (Yeast).